A 758-amino-acid chain; its full sequence is Photosystem I P700 chlorophyll a apoprotein A1 (758 aa).

A run of 8 helical transmembrane segments spans residues 78–101, 164–187, 203–227, 299–317, 354–377, 393–419, 441–463, and 539–557; these read VFSAHFGQLSIIFLWLSGMYFHGA, LYCTAIGALVFAGLMLFAGWFHYH, LNHHLAGLLGLGSLSWARHQVHVSL, IAHHHLAIAILFLIAGHMY, WHAQLSINLAMLGSLTIVVAQHMY, LSLFTHHMWIGGFLIVGAAAHAAIFMV, AIISHLNWVCIFLGFHSFGLYIH, and FLVHHIHAFTIHVTVLILL. Residues Cys581 and Cys590 each contribute to the [4Fe-4S] cluster site. 2 consecutive transmembrane segments (helical) span residues 597 to 618 and 672 to 694; these read HVFLGLFWMYNSISVVIFHFSW and LSAYGLFFLGAHFVWAFSLMFLF. Position 683 (His683) interacts with chlorophyll a'. Chlorophyll a is bound by residues Met691 and Tyr699. Trp700 is a binding site for phylloquinone. Residues 732–753 traverse the membrane as a helical segment; that stretch reads AVGVTHYLLGGIATTWAFFLAR.

This sequence belongs to the PsaA/PsaB family. As to quaternary structure, the PsaA/B heterodimer binds the P700 chlorophyll special pair and subsequent electron acceptors. PSI consists of a core antenna complex that captures photons, and an electron transfer chain that converts photonic excitation into a charge separation. The eukaryotic PSI reaction center is composed of at least 11 subunits. It depends on P700 is a chlorophyll a/chlorophyll a' dimer, A0 is one or more chlorophyll a, A1 is one or both phylloquinones and FX is a shared 4Fe-4S iron-sulfur center. as a cofactor.

Its subcellular location is the plastid. It localises to the chloroplast thylakoid membrane. The enzyme catalyses reduced [plastocyanin] + hnu + oxidized [2Fe-2S]-[ferredoxin] = oxidized [plastocyanin] + reduced [2Fe-2S]-[ferredoxin]. PsaA and PsaB bind P700, the primary electron donor of photosystem I (PSI), as well as the electron acceptors A0, A1 and FX. PSI is a plastocyanin-ferredoxin oxidoreductase, converting photonic excitation into a charge separation, which transfers an electron from the donor P700 chlorophyll pair to the spectroscopically characterized acceptors A0, A1, FX, FA and FB in turn. Oxidized P700 is reduced on the lumenal side of the thylakoid membrane by plastocyanin. The polypeptide is Photosystem I P700 chlorophyll a apoprotein A1 (Pisum sativum (Garden pea)).